The primary structure comprises 136 residues: ATP synthase epsilon chain (136 aa).

A disordered region spans residues 100–120 (QGALEEANRGEDKPNQLKASN). Residues 105-114 (EANRGEDKPN) are compositionally biased toward basic and acidic residues.

Belongs to the ATPase epsilon chain family. F-type ATPases have 2 components, CF(1) - the catalytic core - and CF(0) - the membrane proton channel. CF(1) has five subunits: alpha(3), beta(3), gamma(1), delta(1), epsilon(1). CF(0) has three main subunits: a, b and c.

It localises to the cellular thylakoid membrane. In terms of biological role, produces ATP from ADP in the presence of a proton gradient across the membrane. The sequence is that of ATP synthase epsilon chain (atpC) from Synechocystis sp. (strain ATCC 27184 / PCC 6803 / Kazusa).